A 2677-amino-acid polypeptide reads, in one-letter code: Probable helicase senataxin (2677 aa).

K339 participates in a covalent cross-link: Glycyl lysine isopeptide (Lys-Gly) (interchain with G-Cter in SUMO1). Phosphoserine is present on residues S615, S642, and S878. Residue K894 forms a Glycyl lysine isopeptide (Lys-Gly) (interchain with G-Cter in SUMO2) linkage. S911, S947, S956, S1017, and S1019 each carry phosphoserine. Glycyl lysine isopeptide (Lys-Gly) (interchain with G-Cter in SUMO2) cross-links involve residues K1056 and K1063. 2 disordered regions span residues 1158 to 1219 and 1237 to 1258; these read KKPK…TTVS and PVSK…RSSN. Residues 1176-1187 show a composition bias toward polar residues; sequence PSSSVRNEGQSD. The segment covering 1188–1205 has biased composition (basic and acidic residues); it reads TNKRDLVGNDFKSIDRRT. Positions 1206-1219 are enriched in polar residues; the sequence is STPNSRIQRATTVS. Phosphoserine is present on S1330. Glycyl lysine isopeptide (Lys-Gly) (interchain with G-Cter in SUMO2) cross-links involve residues K1340 and K1341. A disordered region spans residues 1351–1385; it reads QRQIRPKSQKNRRRLSDCESTDVKRAGSHTAQNSD. Over residues 1354–1363 the composition is skewed to basic residues; it reads IRPKSQKNRR. Over residues 1364-1375 the composition is skewed to basic and acidic residues; the sequence is RLSDCESTDVKR. Residue S1366 is modified to Phosphoserine. Residue K1415 forms a Glycyl lysine isopeptide (Lys-Gly) (interchain with G-Cter in SUMO2) linkage. S1489 is subject to Phosphoserine. A disordered region spans residues 1579–1604; it reads FRKPGLPPPASKPLRPTTKIFSSKST. Phosphoserine occurs at positions 1621, 1623, and 1663. 1963–1970 provides a ligand contact to ATP; it reads GPPGTGKS. The Bipartite nuclear localization signal motif lies at 2070-2087; the sequence is KKELPSHVQAMHKRKEFL. Residues 2105–2136 adopt a coiled-coil conformation; the sequence is REIQRQELDENISKVSKERQELASKIKEVQGR. The residue at position 2474 (T2474) is a Phosphothreonine. Disordered regions lie at residues 2474–2496, 2556–2577, and 2597–2677; these read THPP…SKLD, WDPQ…EPGF, and LSSH…RKLL. The span at 2560 to 2573 shows a compositional bias: pro residues; that stretch reads PSSPQHPGATPPTG. The segment covering 2628–2671 has biased composition (basic and acidic residues); the sequence is ELCHRREARAFSEGEQEKCGSETHHTRRNSRWDKRTLEQEDSSS. The tract at residues 2661-2677 is necessary for nuclear localization; the sequence is KRTLEQEDSSSKKRKLL.

The protein belongs to the DNA2/NAM7 helicase family. As to quaternary structure, homodimer. Interacts with PER2; the interaction inhibits termination of circadian target genes. Interacts with CHD4, POLR2A, PRKDC and TRIM28. Interacts with UBE2I. Interacts (via N-terminus domain) with EXOSC9 (via C-terminus region); the interaction enhances SETX sumoylation. Interacts with NCL (via N-terminus domain). Interacts with PABPN1, PABPC1 and SF3B1. Interacts with SMN1/SMN2 and POLR2A; SMN1/SMN2 recruits SETX to POLR2A. In terms of processing, ubiquitinated. Post-translationally, sumoylated preferentially with SUMO2 or SUMO3. In terms of tissue distribution, highly expressed in skeletal muscle. Expressed in heart, fibroblast, placenta and liver. Weakly expressed in brain and lung. Expressed in the cortex of the kidney (highly expressed in tubular epithelial cells but low expression in the glomerulus).

The protein resides in the nucleus. The protein localises to the nucleoplasm. It localises to the nucleolus. It is found in the cytoplasm. Its subcellular location is the chromosome. The protein resides in the telomere. The protein localises to the cell projection. It localises to the axon. It is found in the growth cone. In terms of biological role, probable RNA/DNA helicase involved in diverse aspects of RNA metabolism and genomic integrity. Plays a role in transcription regulation by its ability to modulate RNA Polymerase II (Pol II) binding to chromatin and through its interaction with proteins involved in transcription. Contributes to the mRNA splicing efficiency and splice site selection. Required for the resolution of R-loop RNA-DNA hybrid formation at G-rich pause sites located downstream of the poly(A) site, allowing XRN2 recruitment and XRN2-mediated degradation of the downstream cleaved RNA and hence efficient RNA polymerase II (RNAp II) transcription termination. Required for the 3' transcriptional termination of PER1 and CRY2, thus playing an important role in the circadian rhythm regulation. Involved in DNA double-strand breaks damage response generated by oxidative stress. In association with RRP45, targets the RNA exosome complex to sites of transcription-induced DNA damage. Plays a role in the development and maturation of germ cells: essential for male meiosis, acting at the interface of transcription and meiotic recombination, and in the process of gene silencing during meiotic sex chromosome inactivation (MSCI). May be involved in telomeric stability through the regulation of telomere repeat-containing RNA (TERRA) transcription. Plays a role in neurite outgrowth in hippocampal cells through FGF8-activated signaling pathways. Inhibits retinoic acid-induced apoptosis. The sequence is that of Probable helicase senataxin from Homo sapiens (Human).